Reading from the N-terminus, the 877-residue chain is MTLARFVLALVLGALPEVVSFDSVLNDSLHHRHRHRHSPPPGLQYPYYLPTQQRPPRTRPPPPLPRFPRPPRALPAQRPHALQAGHTPRPHPWGCPAGEPWVSVTDFGAPCLQWAEVPPFLERSPPASWAQLRGQRHNFCRSPDGAGRPWCFYGDARGKVDWGYCDCRHGSVRLRGGKNEFEGTVEVYASGVWGTVCSSHWDDSDASVICHQLQLGGKGIAKQTPFSGLGLIPIYWSNVRCQGDEENILLCEKDIWQGGVCPQKMAAAVTCSFSHGPTFPIIRLVGGSSVHEGRVELYHAGQWGTVCDDQWDDADAEVICRQLSLSGIAKAWHQAYFGEGSGPVMLDEVRCTGNELSIEQCPKSSWGEHNCGHKEDAGVSCTPLTDGVIRLAGGKGSHEGRLEVYYRGQWGTVCDDGWTELNTYVVCRQLGFKFGKQASANHFEESTGPIWLDDVSCSGKETRFLQCSRRQWGRHDCSHREDVSIACYPGGEGHRLSLGFPVRLMDGENKKEGRVEVFINGQWGTICDDGWTDKDAAVICRQLGYKGPARARTMAYFGEGKGPIHVDNVRCTGNERSLADCIKQDIGRHNCRHSEDAGVICDYFGKKASGNSNKESLSSVCGLRLLHRRQKRIIGGKNSLRGGWPWQVSLRLKSSHGDGRLLCGATLLSSCWVLTAAHCFKRYGNSTRNYAVRVGDYHTLVPEEFEEEVGVQQIVIHREYRPDSSDYDIALVRLQGPEEQCARFSSHVLPACLPLWRERPQKTASNCYITGWGDTGRAYSRTLQQAAIPLLPKRFCEERYKGXFTGRMLCAGNLHEHKRVDSCQGDSGGPLMCERPGESWVVYGVTSWGYGCGVKDSPGVYTKVSAFVPWIKSVTKL.

Positions 1–20 (MTLARFVLALVLGALPEVVS) are cleaved as a signal peptide. An N-linked (GlcNAc...) asparagine glycan is attached at N26. A disordered region spans residues 31-90 (HRHRHRHSPPPGLQYPYYLPTQQRPPRTRPPPPLPRFPRPPRALPAQRPHALQAGHTPRP). Low complexity predominate over residues 44–55 (QYPYYLPTQQRP). Residues 58–73 (TRPPPPLPRFPRPPRA) show a composition bias toward pro residues. The Kringle domain maps to 95–167 (CPAGEPWVSV…GKVDWGYCDC (73 aa)). Intrachain disulfides connect C95–C167, C111–C151, C140–C165, C197–C261, C210–C271, C241–C251, C307–C371, C320–C381, C351–C361, C414–C477, C427–C487, C457–C467, C527–C591, C540–C601, C571–C581, C621–C752, C663–C679, C767–C833, C796–C810, and C823–C852. SRCR domains lie at 172 to 273 (VRLR…TCSF), 282 to 383 (IRLV…SCTP), 389 to 489 (IRLA…ACYP), and 502 to 603 (VRLM…ICDY). A zymogen activation region region spans residues 621–632 (CGLRLLHRRQKR). One can recognise a Peptidase S1 domain in the interval 633–876 (IIGGKNSLRG…FVPWIKSVTK (244 aa)). H678 functions as the Charge relay system in the catalytic mechanism. N-linked (GlcNAc...) asparagine glycosylation occurs at N685. The active-site Charge relay system is D728. S827 functions as the Charge relay system in the catalytic mechanism.

Belongs to the peptidase S1 family.

The protein localises to the secreted. Functionally, plays a role in neuronal plasticity and the proteolytic action may subserve structural reorganizations associated with learning and memory operations. This is Neurotrypsin (PRSS12) from Pongo pygmaeus (Bornean orangutan).